The following is a 485-amino-acid chain: Adenosylhomocysteinase (485 aa).

The substrate site is built by T64, D139, and E205. 206 to 208 (TTT) serves as a coordination point for NAD(+). Residues K235 and D239 each coordinate substrate. NAD(+) contacts are provided by residues N240, 269–274 (GYGDVG), E292, N327, 348–350 (IGH), and N397.

It belongs to the adenosylhomocysteinase family. NAD(+) is required as a cofactor.

It carries out the reaction S-adenosyl-L-homocysteine + H2O = L-homocysteine + adenosine. The protein operates within amino-acid biosynthesis; L-homocysteine biosynthesis; L-homocysteine from S-adenosyl-L-homocysteine: step 1/1. Its function is as follows. Adenosylhomocysteine is a competitive inhibitor of S-adenosyl-L-methionine-dependent methyl transferase reactions; therefore adenosylhomocysteinase may play a key role in the control of methylations via regulation of the intracellular concentration of adenosylhomocysteine. In Phalaenopsis sp. (Moth orchid), this protein is Adenosylhomocysteinase (SAHH).